We begin with the raw amino-acid sequence, 152 residues long: Transcriptional regulator MraZ (152 aa).

SpoVT-AbrB domains follow at residues 5–52 (ASSL…PLAQ) and 81–124 (ATEY…DEAR).

The protein belongs to the MraZ family. As to quaternary structure, forms oligomers.

The protein resides in the cytoplasm. The protein localises to the nucleoid. The chain is Transcriptional regulator MraZ from Pseudoalteromonas translucida (strain TAC 125).